We begin with the raw amino-acid sequence, 404 residues long: Protrudin (404 aa).

Residues 1 to 25 are disordered; sequence MQSSDRDLSGPEASPSVMPEVLSEC. Residues 1–63 are Cytoplasmic-facing; sequence MQSSDRDLSG…LKDAGDGVRY (63 aa). The interval 1-92 is sufficient for homooligomerization; it reads MQSSDRDLSG…LFLTLNEGAW (92 aa). The tract at residues 1-205 is sufficient for localization to endoplasmic reticulum tubular network and for interactions with REEP1, REEP5, ATL1, ATL2, ATL3 and SPAST; sequence MQSSDRDLSG…LYLLPLCWVL (205 aa). Residues 51–64 are necessary for interaction with RAB11A and function in neurite outgrowth; that stretch reads LEPLKDAGDGVRYL. The helical transmembrane segment at 64–85 threads the bilayer; sequence LLRWQMPLCSLLTCLGLNILFL. Residues 86-90 lie on the Lumenal side of the membrane; that stretch reads TLNEG. Residues 91 to 109 form a helical membrane-spanning segment; that stretch reads AWYSVGALIISVPALLGYL. Residues 110-187 are Cytoplasmic-facing; that stretch reads QEVCRAQLPE…NPVVSSQFYG (78 aa). Positions 188 to 208 form an intramembrane region, helical; the sequence is ALLGMVCMLYLLPLCWVLALL. The Cytoplasmic segment spans residues 209–404; that stretch reads NSTLFLGNGE…CASCNQTLSK (196 aa). The disordered stretch occupies residues 259-299; the sequence is DSTPAPTPTEDLTPGSVEEAEEAEPDEEFKDAIEEDDEGTP. The necessary for interaction with KIF5A stretch occupies residues 271 to 354; that stretch reads TPGSVEEAEE…GCAATFSVLK (84 aa). Positions 276-299 are enriched in acidic residues; the sequence is EEAEEAEPDEEFKDAIEEDDEGTP. The interval 286–292 is necessary for interaction with VAPA; the sequence is EFKDAIE. The FYVE-type zinc finger occupies 337–403; the sequence is TNNFGNCAGC…VCASCNQTLS (67 aa). Zn(2+) contacts are provided by Cys-343, Cys-346, Cys-359, Cys-362, Cys-367, Cys-370, Cys-395, and Cys-398.

Can form homooligomers (monomers, dimers and tetramers). Interacts with FKBP8; may negatively regulate ZFYVE27 phosphorylation. Interacts with VAPA (via MSP domain); may regulate ZFYVE27 retention in the endoplasmic reticulum and its function in cell projections formation. Interacts with VAPB (via MSP domain). Interacts with RAB11A (GDP-bound form); regulates RAB11A. Interacts with RAB11B (GDP-bound form), REEP1, REEP5, ATL1, ATL2, ATL3, SPAST, SURF4, KIF5A, KIF5B, KIF5C and RTN3. In terms of processing, phosphorylated. Phosphorylation is induced by NGF through the MAPK/ERK pathway and modulates interaction with RAB11A.

Its subcellular location is the recycling endosome membrane. The protein localises to the endoplasmic reticulum membrane. It is found in the cell projection. It localises to the growth cone membrane. In terms of biological role, key regulator of RAB11-dependent vesicular trafficking during neurite extension through polarized membrane transport. Promotes axonal elongation and contributes to the establishment of neuronal cell polarity. Involved in nerve growth factor-induced neurite formation in VAPA-dependent manner. Contributes to both the formation and stabilization of the tubular ER network. Involved in ER morphogenesis by regulating the sheet-to-tubule balance and possibly the density of tubule interconnections. Acts as an adapter protein that facilitates the interaction of KIF5A with VAPA, VAPB, SURF4, RAB11A, RAB11B and RTN3 and the ZFYVE27-KIF5A complex contributes to the transport of these proteins in neurons. Can induce formation of neurite-like membrane protrusions in non-neuronal cells in a KIF5A/B-dependent manner. In Rattus norvegicus (Rat), this protein is Protrudin (Zfyve27).